Reading from the N-terminus, the 756-residue chain is Protease KEX1 (756 aa).

Residues 1 to 24 (MILSSQLMLALIAVSGYGKAMQVP) form the signal peptide. N-linked (GlcNAc...) asparagine glycosylation is found at N121, N144, and N152. The 311-residue stretch at 130-440 (QWHLINPNYP…FGKLDAYNIV (311 aa)) folds into the Peptidase S8 domain. Residues D164 and H202 each act as charge relay system in the active site. Cystine bridges form between C218–C365 and C310–C340. The Charge relay system role is filled by S373. N392 and N538 each carry an N-linked (GlcNAc...) asparagine glycan. Positions 449–583 (VNPQGWLYLP…RLKMFGETID (135 aa)) constitute a P/Homo B domain. Positions 599–632 (AEVKSTESKTTTPTAQTSSFTTTSGEETSGANKL) are disordered. The segment covering 606–628 (SKTTTPTAQTSSFTTTSGEETSG) has biased composition (low complexity). The chain crosses the membrane as a helical span at residues 641-661 (LYLAIFVIGAIVIIIYYLFFL). The disordered stretch occupies residues 715–756 (EEELSPRESSSNNPFGNESLESFDNSPDHTSNLLGQNSIPNK). A compositionally biased stretch (polar residues) spans 721 to 756 (RESSSNNPFGNESLESFDNSPDHTSNLLGQNSIPNK).

It belongs to the peptidase S8 family. Furin subfamily. Requires Ca(2+) as cofactor.

Its subcellular location is the membrane. Probably involved in the processing of the precursor of m1-toxin and alpha-factor. This Kluyveromyces lactis (strain ATCC 8585 / CBS 2359 / DSM 70799 / NBRC 1267 / NRRL Y-1140 / WM37) (Yeast) protein is Protease KEX1 (KEX1).